Reading from the N-terminus, the 167-residue chain is Leukotoxin-activating lysine-acyltransferase LktC serotype A1 (167 aa).

Catalysis depends on residues His22 and Asp91.

The protein belongs to the RTX toxin acyltransferase family.

The protein localises to the cytoplasm. It catalyses the reaction a fatty acyl-[ACP] + L-lysyl-[protein] = N(6)-(fatty acyl)-L-lysyl-[protein] + holo-[ACP] + H(+). Involved in fatty acylation of the protoxin (LktA) at two internal lysine residues, thereby converting it to the active toxin. The chain is Leukotoxin-activating lysine-acyltransferase LktC serotype A1 (lktC) from Mannheimia haemolytica (Pasteurella haemolytica).